A 320-amino-acid polypeptide reads, in one-letter code: Myoblast determination protein 1 (320 aa).

A Peptide (Met-Gly) (interchain with G-Cter in ubiquitin) cross-link involves residue Met1. Residue Lys104 is modified to N6-methyllysine; by EHMT2. One can recognise a bHLH domain in the interval 109–160 (DRRKAATMRERRRLSKVNEAFETLKRCTSSNPNQRLPKVEILRNAIRYIEGL). 2 disordered regions span residues 174 to 219 (AAAA…PPSG) and 262 to 320 (ESPA…YQVL). 2 stretches are compositionally biased toward polar residues: residues 197 to 207 (SDASSPRSNCS) and 291 to 301 (GESSGDPTQSP).

As to quaternary structure, efficient DNA binding requires dimerization with another bHLH protein. Seems to form active heterodimers with ITF-2. Interacts with SUV39H1. Interacts with DDX5. Interacts with CHD2. Interacts with TSC22D3. Interacts with SETD3. Interacts with P-TEFB complex; promotes the transcriptional activity of MYOD1 through its CDK9-mediated phosphorylation. Interacts with CSRP3. Interacts with NUPR1. In terms of processing, phosphorylated by CDK9. This phosphorylation promotes its function in muscle differentiation. Post-translationally, acetylated by a complex containing EP300 and PCAF. The acetylation is essential to activate target genes. Conversely, its deacetylation by SIRT1 inhibits its function. Ubiquitinated on the N-terminus; which is required for proteasomal degradation. In terms of processing, methylation at Lys-104 by EHMT2/G9a inhibits myogenic activity.

The protein localises to the nucleus. Functionally, acts as a transcriptional activator that promotes transcription of muscle-specific target genes and plays a role in muscle differentiation. Together with MYF5 and MYOG, co-occupies muscle-specific gene promoter core region during myogenesis. Induces fibroblasts to differentiate into myoblasts. Interacts with and is inhibited by the twist protein. This interaction probably involves the basic domains of both proteins. The protein is Myoblast determination protein 1 (MYOD1) of Homo sapiens (Human).